Reading from the N-terminus, the 261-residue chain is HLA class II histocompatibility antigen, DQ beta 1 chain (261 aa).

The first 32 residues, 1–32 (MSWKKALRIPGGLRAATVTLMLAMLSTPVAEG), serve as a signal peptide directing secretion. The interval 33–126 (RDSPEDFVYQ…LELRTTLQRR (94 aa)) is beta-1. The Extracellular segment spans residues 33 to 230 (RDSPEDFVYQ…RAQSESAQSK (198 aa)). 2 disulfide bridges follow: C47-C111 and C149-C205. N51 is a glycosylation site (N-linked (GlcNAc...) asparagine). The interval 127–220 (VEPTVTISPS…SLQNPITVEW (94 aa)) is beta-2. An Ig-like C1-type domain is found at 129–217 (PTVTISPSRT…EHPSLQNPIT (89 aa)). Residues 221–230 (RAQSESAQSK) form a connecting peptide region. A helical membrane pass occupies residues 231–251 (MLSGIGGFVLGLIFLGLGLII). The Cytoplasmic segment spans residues 252 to 261 (HHRSQKGLLH).

It belongs to the MHC class II family. In terms of assembly, heterodimer of an alpha and a beta subunit; also referred as MHC class II molecule. In the endoplasmic reticulum (ER) it forms a heterononamer; 3 MHC class II molecules bind to a CD74 homotrimer (also known as invariant chain or HLA class II histocompatibility antigen gamma chain). In the endosomal/lysosomal system; CD74 undergoes sequential degradation by various proteases; leaving a small fragment termed CLIP on each MHC class II molecule. MHC class II molecule interacts with HLA_DM, and HLA_DO in B-cells, in order to release CLIP and facilitate the binding of antigenic peptides.

The protein localises to the cell membrane. The protein resides in the endoplasmic reticulum membrane. It localises to the golgi apparatus. Its subcellular location is the trans-Golgi network membrane. It is found in the endosome membrane. The protein localises to the lysosome membrane. In terms of biological role, binds peptides derived from antigens that access the endocytic route of antigen presenting cells (APC) and presents them on the cell surface for recognition by the CD4 T-cells. The peptide binding cleft accommodates peptides of 10-30 residues. The peptides presented by MHC class II molecules are generated mostly by degradation of proteins that access the endocytic route, where they are processed by lysosomal proteases and other hydrolases. Exogenous antigens that have been endocytosed by the APC are thus readily available for presentation via MHC II molecules, and for this reason this antigen presentation pathway is usually referred to as exogenous. As membrane proteins on their way to degradation in lysosomes as part of their normal turn-over are also contained in the endosomal/lysosomal compartments, exogenous antigens must compete with those derived from endogenous components. Autophagy is also a source of endogenous peptides, autophagosomes constitutively fuse with MHC class II loading compartments. In addition to APCs, other cells of the gastrointestinal tract, such as epithelial cells, express MHC class II molecules and CD74 and act as APCs, which is an unusual trait of the GI tract. To produce a MHC class II molecule that presents an antigen, three MHC class II molecules (heterodimers of an alpha and a beta chain) associate with a CD74 trimer in the ER to form a heterononamer. Soon after the entry of this complex into the endosomal/lysosomal system where antigen processing occurs, CD74 undergoes a sequential degradation by various proteases, including CTSS and CTSL, leaving a small fragment termed CLIP (class-II-associated invariant chain peptide). The removal of CLIP is facilitated by HLA-DM via direct binding to the alpha-beta-CLIP complex so that CLIP is released. HLA-DM stabilizes MHC class II molecules until primary high affinity antigenic peptides are bound. The MHC II molecule bound to a peptide is then transported to the cell membrane surface. In B-cells, the interaction between HLA-DM and MHC class II molecules is regulated by HLA-DO. Primary dendritic cells (DCs) also to express HLA-DO. Lysosomal microenvironment has been implicated in the regulation of antigen loading into MHC II molecules, increased acidification produces increased proteolysis and efficient peptide loading. The protein is HLA class II histocompatibility antigen, DQ beta 1 chain (HLA-DQB1) of Homo sapiens (Human).